The following is a 299-amino-acid chain: Peroxisomal biogenesis factor 19 (299 aa).

The disordered stretch occupies residues 1-61 (MAAAEEGCGV…KRAPGDTAKD (61 aa)). A2 carries the N-acetylalanine modification. The interval 2-56 (AAAEEGCGVGVEDDRELEELLESALDDFDKAKPSPEHAPTISAPDASGPQKRAPG) is docking to the peroxisome membrane and binding to PEX3. The tract at residues 2-91 (AAAEEGCGVG…QATAEFEKAM (90 aa)) is necessary for PEX19 function on peroxisome biogenesis. The span at 12–27 (VEDDRELEELLESALD) shows a compositional bias: acidic residues. A phosphoserine mark is found at S35 and S66. At T236 the chain carries Phosphothreonine. C296 is modified (cysteine methyl ester). Residue C296 is the site of S-farnesyl cysteine attachment. Positions 297 to 299 (LIM) are cleaved as a propeptide — removed in mature form.

Belongs to the peroxin-19 family. In terms of assembly, interacts with a broad range of peroxisomal membrane proteins, including PEX3, PEX10, PEX11A, PEX11B, PEX12, PEX13, PEX14 and PEX16, PXMP2/PMP22, PXMP4/PMP24, SLC25A17/PMP34, ABCD1/ALDP, ABCD2/ALDRP, and ABCD3/PMP70. Also interacts with the tumor suppressor CDKN2A/p19ARF.

The protein localises to the cytoplasm. It is found in the peroxisome membrane. In terms of biological role, necessary for early peroxisomal biogenesis. Acts both as a cytosolic chaperone and as an import receptor for peroxisomal membrane proteins (PMPs). Binds and stabilizes newly synthesized PMPs in the cytoplasm by interacting with their hydrophobic membrane-spanning domains, and targets them to the peroxisome membrane by binding to the integral membrane protein PEX3. Excludes CDKN2A from the nucleus and prevents its interaction with MDM2, which results in active degradation of TP53. The chain is Peroxisomal biogenesis factor 19 (Pex19) from Mus musculus (Mouse).